Reading from the N-terminus, the 600-residue chain is Cationic amino acid transporter 4, vacuolar (600 aa).

Residues 1-32 (MNSLVRRKQVDSVHLIKNDGPHQLAKKLSAVD) are Cytoplasmic-facing. Residues 33–53 (LVAIGVGTTIGAGVYILVGTV) traverse the membrane as a helical segment. At 54–60 (AREHTGP) the chain is on the vacuolar side. A helical membrane pass occupies residues 61–81 (ALAVSFFIAGVAAALSACCYA). The Cytoplasmic segment spans residues 82 to 92 (ELASRCPSAGS). The chain crosses the membrane as a helical span at residues 93-115 (AYHYAYICLGEGIAWLVGWALVL). The Vacuolar segment spans residues 116–152 (DYTIGGSAIARGITPNLASFFGGLDNLPVFLARQTIP). The helical transmembrane segment at 153-173 (GVGIVVDPCAALLIMIVTILL) threads the bilayer. Topologically, residues 174–184 (CFGIKESSTVQ) are cytoplasmic. Residues 185-205 (AIVTSVNVCTLVFIIVVGGYL) form a helical membrane-spanning segment. The Vacuolar portion of the chain corresponds to 206–220 (ACKTGWVGYDLPSGY). Residues 221-241 (FPFGLNGILAGSAVVFFSYIG) traverse the membrane as a helical segment. Over 242–264 (FDTVTSTAEEVKNPQRDLPLGIG) the chain is Cytoplasmic. A helical transmembrane segment spans residues 265 to 285 (IALLICCILYMLLSVVIVGLV). Residues 286–308 (PYYSLNPDTPISSAFGDSGMQWA) lie on the Vacuolar side of the membrane. A helical transmembrane segment spans residues 309-329 (AYILTTGAITALCASLLGSLL). Topologically, residues 330–360 (AQPRIFMAMARDGLLPAFFSEISPRTQVPVK) are cytoplasmic. The helical transmembrane segment at 361–381 (STIAIGVLAAALAFFMDVAQL) threads the bilayer. Residue Ser382 is a topological domain, vacuolar. Residues 383–403 (EMVSVGTLMAFTAVAVCVLVL) form a helical membrane-spanning segment. Over 404-462 (RYVPPDGVPLSSSSQTLSDTDESRAETENFLVDAIESSDSPLLGNETARDEKYFGKRRK) the chain is Cytoplasmic. Residues 463–483 (IAAWSIALVCIGVLGLASAAS) traverse the membrane as a helical segment. Residues 484–492 (AERLPSFPR) are Vacuolar-facing. A helical membrane pass occupies residues 493 to 513 (FTICGVSAVILLGSLITLGYI). Topologically, residues 514–528 (DEDEERHNFGHKGGF) are cytoplasmic. A helical transmembrane segment spans residues 529–549 (LCPFVPYLPVLCILINTYLII). Residue Asn550 is a topological domain, vacuolar. A helical transmembrane segment spans residues 551-571 (IGAGTWIRVLIWLLIGSMIYI). Residues 572–600 (FYGRSHSLLNNAVYVPTMTCTRKTTDHLA) lie on the Cytoplasmic side of the membrane.

This sequence belongs to the amino acid-polyamine-organocation (APC) superfamily. Cationic amino acid transporter (CAT) (TC 2.A.3.3) family. Expressed in roots, stems, flowers, and leaves.

It localises to the vacuole membrane. Permease involved in the transport of the cationic amino acids. This chain is Cationic amino acid transporter 4, vacuolar (CAT4), found in Arabidopsis thaliana (Mouse-ear cress).